Here is a 290-residue protein sequence, read N- to C-terminus: Bifunctional protein FolD (290 aa).

Residues 166-168 (GAS) and I232 each bind NADP(+).

This sequence belongs to the tetrahydrofolate dehydrogenase/cyclohydrolase family. In terms of assembly, homodimer.

It catalyses the reaction (6R)-5,10-methylene-5,6,7,8-tetrahydrofolate + NADP(+) = (6R)-5,10-methenyltetrahydrofolate + NADPH. The catalysed reaction is (6R)-5,10-methenyltetrahydrofolate + H2O = (6R)-10-formyltetrahydrofolate + H(+). It functions in the pathway one-carbon metabolism; tetrahydrofolate interconversion. Functionally, catalyzes the oxidation of 5,10-methylenetetrahydrofolate to 5,10-methenyltetrahydrofolate and then the hydrolysis of 5,10-methenyltetrahydrofolate to 10-formyltetrahydrofolate. This Proteus mirabilis (strain HI4320) protein is Bifunctional protein FolD.